The following is a 521-amino-acid chain: Acetyl-CoA hydrolase (521 aa).

276–280 (GIGNI) contacts CoA. Glutamate 301 (5-glutamyl coenzyme A thioester intermediate) is an active-site residue. CoA contacts are provided by asparagine 391 and glycine 395.

This sequence belongs to the acetyl-CoA hydrolase/transferase family.

It is found in the cytoplasm. The enzyme catalyses acetyl-CoA + H2O = acetate + CoA + H(+). Its function is as follows. Presumably involved in regulating the intracellular acetyl-CoA pool for fatty acid and cholesterol synthesis and fatty acid oxidation. The protein is Acetyl-CoA hydrolase (ach1) of Schizosaccharomyces pombe (strain 972 / ATCC 24843) (Fission yeast).